The primary structure comprises 364 residues: Chorismate synthase (364 aa).

Residues 41–60 (MQHDLDRRRPGTSRYTTARR) are disordered. NADP(+) is bound by residues Arg48 and Arg54. Residues 125–127 (RSS), 238–239 (NA), Gly278, 293–297 (KPTSS), and Arg319 contribute to the FMN site.

This sequence belongs to the chorismate synthase family. In terms of assembly, homotetramer. FMNH2 serves as cofactor.

It carries out the reaction 5-O-(1-carboxyvinyl)-3-phosphoshikimate = chorismate + phosphate. It functions in the pathway metabolic intermediate biosynthesis; chorismate biosynthesis; chorismate from D-erythrose 4-phosphate and phosphoenolpyruvate: step 7/7. Functionally, catalyzes the anti-1,4-elimination of the C-3 phosphate and the C-6 proR hydrogen from 5-enolpyruvylshikimate-3-phosphate (EPSP) to yield chorismate, which is the branch point compound that serves as the starting substrate for the three terminal pathways of aromatic amino acid biosynthesis. This reaction introduces a second double bond into the aromatic ring system. The protein is Chorismate synthase of Shewanella baltica (strain OS223).